Consider the following 415-residue polypeptide: Histidine--tRNA ligase (415 aa).

The protein belongs to the class-II aminoacyl-tRNA synthetase family. Homodimer.

Its subcellular location is the cytoplasm. It carries out the reaction tRNA(His) + L-histidine + ATP = L-histidyl-tRNA(His) + AMP + diphosphate + H(+). The protein is Histidine--tRNA ligase of Clostridium botulinum (strain Langeland / NCTC 10281 / Type F).